The primary structure comprises 163 residues: Neurotrophin-3 (163 aa).

The N-terminal stretch at 1 to 3 (IQS) is a signal peptide. Positions 4–119 (TSMDQGILTE…ALNRTSRRKR (116 aa)) are excised as a propeptide. Disordered stretches follow at residues 38–60 (ARTK…ATAS) and 90–131 (LLSE…YSVC). Residue Asn112 is glycosylated (N-linked (GlcNAc...) asparagine).

The protein belongs to the NGF-beta family.

It localises to the secreted. In terms of biological role, seems to promote the survival of visceral and proprioceptive sensory neurons. This chain is Neurotrophin-3 (NTF3), found in Eunectes notaeus (Yellow anaconda).